A 102-amino-acid polypeptide reads, in one-letter code: Large ribosomal subunit protein uL24 (102 aa).

Belongs to the universal ribosomal protein uL24 family. In terms of assembly, part of the 50S ribosomal subunit.

In terms of biological role, one of two assembly initiator proteins, it binds directly to the 5'-end of the 23S rRNA, where it nucleates assembly of the 50S subunit. Functionally, one of the proteins that surrounds the polypeptide exit tunnel on the outside of the subunit. This is Large ribosomal subunit protein uL24 from Macrococcus caseolyticus (strain JCSC5402) (Macrococcoides caseolyticum).